The sequence spans 303 residues: tRNA dimethylallyltransferase (303 aa).

12–19 lines the ATP pocket; it reads GPTGVGKT. Position 14–19 (14–19) interacts with substrate; it reads TGVGKT. The segment at 37-40 is interaction with substrate tRNA; it reads DSAQ.

This sequence belongs to the IPP transferase family. In terms of assembly, monomer. Requires Mg(2+) as cofactor.

The enzyme catalyses adenosine(37) in tRNA + dimethylallyl diphosphate = N(6)-dimethylallyladenosine(37) in tRNA + diphosphate. Its function is as follows. Catalyzes the transfer of a dimethylallyl group onto the adenine at position 37 in tRNAs that read codons beginning with uridine, leading to the formation of N6-(dimethylallyl)adenosine (i(6)A). This is tRNA dimethylallyltransferase from Fusobacterium nucleatum subsp. nucleatum (strain ATCC 25586 / DSM 15643 / BCRC 10681 / CIP 101130 / JCM 8532 / KCTC 2640 / LMG 13131 / VPI 4355).